Here is a 479-residue protein sequence, read N- to C-terminus: Lysosomal protective protein (479 aa).

Residues 1–27 (MFRAALWPPVLLLLQLLLLACAPGGEG) form the signal peptide. 4 disulfides stabilise this stretch: Cys-87-Cys-361, Cys-239-Cys-255, Cys-240-Cys-245, and Cys-280-Cys-330. N-linked (GlcNAc...) asparagine glycosylation occurs at Asn-144. Residue Ser-177 is part of the active site. A glycan (N-linked (GlcNAc...) asparagine) is linked at Asn-332. Catalysis depends on residues Asp-399 and His-456.

The protein belongs to the peptidase S10 family. Heterodimer of a 32 kDa chain and a 20 kDa chain; disulfide-linked.

It localises to the lysosome. It carries out the reaction Release of a C-terminal amino acid with broad specificity.. Functionally, protective protein appears to be essential for both the activity of beta-galactosidase and neuraminidase, it associates with these enzymes and exerts a protective function necessary for their stability and activity. This protein is also a carboxypeptidase and can deamidate tachykinins. This chain is Lysosomal protective protein (CTSA), found in Bos taurus (Bovine).